The primary structure comprises 447 residues: DNA primase DnaG (447 aa).

The Toprim domain occupies 200–274 (DSIIVVEGRA…DIDYVARAPE (75 aa)). Glu-206, Asp-248, and Asp-250 together coordinate Mg(2+).

This sequence belongs to the archaeal DnaG primase family. As to quaternary structure, forms a ternary complex with MCM helicase and DNA. Component of the archaeal exosome complex. Mg(2+) serves as cofactor.

It catalyses the reaction ssDNA + n NTP = ssDNA/pppN(pN)n-1 hybrid + (n-1) diphosphate.. RNA polymerase that catalyzes the synthesis of short RNA molecules used as primers for DNA polymerase during DNA replication. Also part of the exosome, which is a complex involved in RNA degradation. Acts as a poly(A)-binding protein that enhances the interaction between heteromeric, adenine-rich transcripts and the exosome. In Pyrococcus abyssi (strain GE5 / Orsay), this protein is DNA primase DnaG.